We begin with the raw amino-acid sequence, 119 residues long: Holo-[acyl-carrier-protein] synthase (119 aa).

Positions 8 and 59 each coordinate Mg(2+).

It belongs to the P-Pant transferase superfamily. AcpS family. Mg(2+) serves as cofactor.

It is found in the cytoplasm. The catalysed reaction is apo-[ACP] + CoA = holo-[ACP] + adenosine 3',5'-bisphosphate + H(+). Functionally, transfers the 4'-phosphopantetheine moiety from coenzyme A to a Ser of acyl-carrier-protein. The chain is Holo-[acyl-carrier-protein] synthase from Staphylococcus aureus (strain JH1).